Reading from the N-terminus, the 213-residue chain is Protein MobE (213 aa).

This Acidithiobacillus ferrooxidans (Thiobacillus ferrooxidans) protein is Protein MobE (mobE).